Consider the following 132-residue polypeptide: Small ribosomal subunit protein uS8 (132 aa).

Belongs to the universal ribosomal protein uS8 family. In terms of assembly, part of the 30S ribosomal subunit. Contacts proteins S5 and S12.

In terms of biological role, one of the primary rRNA binding proteins, it binds directly to 16S rRNA central domain where it helps coordinate assembly of the platform of the 30S subunit. In Clostridium acetobutylicum (strain ATCC 824 / DSM 792 / JCM 1419 / IAM 19013 / LMG 5710 / NBRC 13948 / NRRL B-527 / VKM B-1787 / 2291 / W), this protein is Small ribosomal subunit protein uS8.